The chain runs to 234 residues: Sugar fermentation stimulation protein A (234 aa).

A DNA-binding region (H-T-H motif) is located at residues 201-220; that stretch reads LLSEAQNKGVEVLAYKAELS.

The protein belongs to the SfsA family.

In terms of biological role, binds to DNA non-specifically. Could be a regulatory factor involved in maltose metabolism. The chain is Sugar fermentation stimulation protein A from Salmonella arizonae (strain ATCC BAA-731 / CDC346-86 / RSK2980).